The sequence spans 401 residues: Histone acetyltransferase type B subunit 2 (401 aa).

5 WD repeats span residues 116–147 (EHEEEITRARYMPQDPNIVATINGQGTVFLYS), 158–189 (FHKDNGYALSFSTLVKGRLLSGSDDHTVALWE), 206–237 (LHSDIINDNKWHNFNKDLFGTVSEDSLLKIND), 249–280 (KCPQPFNTLAFSHHSSNLLAAAGMDSYVYLYD), and 293–324 (GHEDAVNNLEFSTHVDGVVVSSGSDNRLMMWD). The segment at 335-339 (DDAED) is interaction with the histone H4 N-terminus. The WD 6 repeat unit spans residues 350-381 (GHRSSVNDFDLNPQIPWLVASAEEENILQVWK).

It belongs to the WD repeat RBAP46/RBAP48/MSI1 family. As to quaternary structure, component of the HAT-B complex composed of at least HAT1 and HAT2. In the cytoplasm, this complex binds to the histone H4 tail. In the nucleus, the HAT-B complex has an additional component, the histone H3/H4 chaperone HIF1.

The protein localises to the cytoplasm. It is found in the nucleus. Its function is as follows. Regulatory subunit of the histone acetylase B (HAT-B) complex. The complex acetylates 'Lys-12' of histone H4 which is required for telomeric silencing. HAT2 is required for high affinity binding of the acetyltransferase to histone H4, for the nuclear location of HAT1 and for the HAT1-HIF1 interaction. Alone, it is unable to bind to H4, requiring HAT1 for high affinity interaction with the histone tail. HAT2 also has a HAT1 independent function in life-span regulation. The polypeptide is Histone acetyltransferase type B subunit 2 (HAT2) (Saccharomyces cerevisiae (strain ATCC 204508 / S288c) (Baker's yeast)).